Consider the following 121-residue polypeptide: Small ribosomal subunit protein uS13 (121 aa).

The disordered stretch occupies residues 95–121 (GLPVRGQKTKTNARTRKGKRKTVGAKS).

The protein belongs to the universal ribosomal protein uS13 family. As to quaternary structure, part of the 30S ribosomal subunit. Forms a loose heterodimer with protein S19. Forms two bridges to the 50S subunit in the 70S ribosome.

In terms of biological role, located at the top of the head of the 30S subunit, it contacts several helices of the 16S rRNA. In the 70S ribosome it contacts the 23S rRNA (bridge B1a) and protein L5 of the 50S subunit (bridge B1b), connecting the 2 subunits; these bridges are implicated in subunit movement. Contacts the tRNAs in the A and P-sites. This is Small ribosomal subunit protein uS13 from Campylobacter jejuni subsp. jejuni serotype O:23/36 (strain 81-176).